A 761-amino-acid polypeptide reads, in one-letter code: Protein ACTIVITY OF BC1 COMPLEX KINASE 8, chloroplastic (761 aa).

A chloroplast-targeting transit peptide spans 1 to 57; it reads MATSSSSSSSLLLPNINFNSRQSPTITRSVSIAGIFLPRNRLSYNHNLRIRTRLIRA. The Protein kinase domain occupies 288–648; the sequence is RFDYEPIAAA…VKDLRKRWDR (361 aa). Residues 294–302 and Lys-315 contribute to the ATP site; that span reads IAAASLGQV. Asp-452 (proton acceptor) is an active-site residue. A helical membrane pass occupies residues 725 to 745; sequence PATIAYTVCAFFSLQVLIGII.

It belongs to the protein kinase superfamily. ADCK protein kinase family. In terms of tissue distribution, mostly expressed in leaves and flowers, and, to a lower extent, in stems, siliques and roots.

Its subcellular location is the plastid. It localises to the chloroplast envelope. The protein resides in the chloroplast membrane. The enzyme catalyses L-seryl-[protein] + ATP = O-phospho-L-seryl-[protein] + ADP + H(+). It carries out the reaction L-threonyl-[protein] + ATP = O-phospho-L-threonyl-[protein] + ADP + H(+). In terms of biological role, involved in resistance to oxidative stress (e.g. hydrogen peroxide H(2)O(2)), high light and heavy metals (e.g. cadmium ions Cd(2+)). Influences responses to reactive oxygen species (ROS) production. Together with SIA1, regulates iron distribution within the chloroplast and mediates the oxidative stress response. Together with ABC1K7, influences chloroplast lipid synthesis/accumulation and modulates chloroplast membrane composition in response to stress. In Arabidopsis thaliana (Mouse-ear cress), this protein is Protein ACTIVITY OF BC1 COMPLEX KINASE 8, chloroplastic.